Here is a 226-residue protein sequence, read N- to C-terminus: Orotidine 5'-phosphate decarboxylase (226 aa).

Substrate contacts are provided by residues Asp-9, Lys-31, 58 to 67 (DLKLYDIPNT), Thr-115, Arg-176, Gln-184, Gly-204, and Arg-205. Lys-60 functions as the Proton donor in the catalytic mechanism.

The protein belongs to the OMP decarboxylase family. Type 1 subfamily. As to quaternary structure, homodimer.

The catalysed reaction is orotidine 5'-phosphate + H(+) = UMP + CO2. It participates in pyrimidine metabolism; UMP biosynthesis via de novo pathway; UMP from orotate: step 2/2. Catalyzes the decarboxylation of orotidine 5'-monophosphate (OMP) to uridine 5'-monophosphate (UMP). This Wolbachia pipientis subsp. Culex pipiens (strain wPip) protein is Orotidine 5'-phosphate decarboxylase.